Consider the following 471-residue polypeptide: 5-hydroxytryptamine receptor 2B (471 aa).

Residues methionine 1–tryptophan 26 are Extracellular-facing. Asparagine 12 is a glycosylation site (N-linked (GlcNAc...) asparagine). The chain crosses the membrane as a helical span at residues alanine 27–valine 49. Over tryptophan 50 to asparagine 60 the chain is Cytoplasmic. The chain crosses the membrane as a helical span at residues phenylalanine 61–isoleucine 83. Residues threonine 84–proline 99 lie on the Extracellular side of the membrane. The cysteines at positions 98 and 182 are disulfide-linked. A helical transmembrane segment spans residues isoleucine 100 to leucine 121. Ergotamine-binding residues include aspartate 105 and threonine 110. The DRY motif; important for ligand-induced conformation changes signature appears at aspartate 122–tyrosine 124. At aspartate 122–lysine 141 the chain is on the cytoplasmic side. Residues valine 142 to isoleucine 162 form a helical membrane-spanning segment. The Extracellular segment spans residues lysine 163 to glutamate 191. Asparagine 173 and asparagine 179 each carry an N-linked (GlcNAc...) asparagine glycan. Residue leucine 184 coordinates ergotamine. The short motif at aspartate 187–glutamine 190 is the [DE]RFG motif; may stabilize a conformation that preferentially activates signaling via beta-arrestin family members element. The chain crosses the membrane as a helical span at residues phenylalanine 192–leucine 214. Residues threonine 215 to lysine 308 lie on the Cytoplasmic side of the membrane. The chain crosses the membrane as a helical span at residues valine 309–isoleucine 329. The Extracellular segment spans residues threonine 330 to arginine 344. A disulfide bond links cysteine 334 and cysteine 337. The chain crosses the membrane as a helical span at residues leucine 345–leucine 366. The short motif at asparagine 360–tyrosine 364 is the NPxxY motif; important for ligand-induced conformation changes and signaling element. Over phenylalanine 367–valine 471 the chain is Cytoplasmic. A lipid anchor (S-palmitoyl cysteine) is attached at cysteine 381. The PDZ-binding signature appears at serine 469–valine 471.

It belongs to the G-protein coupled receptor 1 family. As to expression, detected in brain, heart and gut.

The protein localises to the cell membrane. It is found in the synapse. The protein resides in the synaptosome. G-protein coupled receptor for 5-hydroxytryptamine (serotonin). Also functions as a receptor for various ergot alkaloid derivatives and psychoactive substances. Ligand binding causes a conformation change that triggers signaling via guanine nucleotide-binding proteins (G proteins) and modulates the activity of downstream effectors. HTR2B is coupled to G(q)/G(11) G alpha proteins and activates phospholipase C-beta, releasing diacylglycerol (DAG) and inositol 1,4,5-trisphosphate (IP3) second messengers that modulate the activity of phosphatidylinositol 3-kinase and promote the release of Ca(2+) ions from intracellular stores, respectively. Beta-arrestin family members inhibit signaling via G proteins and mediate activation of alternative signaling pathways. Plays a role in the regulation of dopamine and 5-hydroxytryptamine release, 5-hydroxytryptamine uptake and in the regulation of extracellular dopamine and 5-hydroxytryptamine levels, and thereby affects neural activity. The polypeptide is 5-hydroxytryptamine receptor 2B (htr2b) (Dichotomyctere fluviatilis (Green pufferfish)).